Reading from the N-terminus, the 141-residue chain is uncharacterized protein (141 aa).

Helical transmembrane passes span 64–84 (IAAV…IEAI) and 112–132 (IVGS…LVLI).

Its subcellular location is the cell membrane. This is an uncharacterized protein from Sinorhizobium fredii (strain NBRC 101917 / NGR234).